A 396-amino-acid polypeptide reads, in one-letter code: Pre-mRNA-splicing regulator WTAP (396 aa).

Methionine 1 carries the N-acetylmethionine modification. Residue serine 14 is modified to Phosphoserine. Low complexity-rich tracts occupy residues 240 to 257 (QQQQ…TTSS) and 278 to 291 (SNGS…SGSG). Residues 240–396 (QQQQSQASAP…SSVNVQGAVL (157 aa)) are disordered. Serine 297, serine 305, serine 306, and serine 341 each carry phosphoserine. The segment covering 305-316 (SSSGNGNKASNS) has biased composition (low complexity). The segment covering 340–351 (DSPTGSENSLTH) has biased composition (polar residues). Threonine 350 is subject to Phosphothreonine. Residues 352–368 (HSNDTDSSHDPQEEKAV) are compositionally biased toward basic and acidic residues. The segment covering 380-396 (HVQNGLDSSVNVQGAVL) has biased composition (polar residues). Position 388 is a phosphoserine (serine 388).

This sequence belongs to the fl(2)d family. Component of the WMM complex, a N6-methyltransferase complex composed of a catalytic subcomplex, named MAC, and of an associated subcomplex, named MACOM. The MAC subcomplex is composed of METTL3 and METTL14. The MACOM subcomplex is composed of WTAP, ZC3H13, CBLL1/HAKAI, VIRMA, and, in some cases of RBM15 (RBM15 or RBM15B). Interacts with WT1. Also a component of a MACOM-like complex, named WTAP complex, composed of WTAP, ZC3H13, CBLL1, VIRMA, RBM15, BCLAF1 and THRAP3. Interacts with CPNE4 (via VWFA domain).

The protein localises to the nucleus speckle. The protein resides in the nucleus. Its subcellular location is the nucleoplasm. It is found in the cytoplasm. Associated component of the WMM complex, a complex that mediates N6-methyladenosine (m6A) methylation of RNAs, a modification that plays a role in the efficiency of mRNA splicing and RNA processing. Acts as a key regulator of m6A methylation by promoting m6A methylation of mRNAs at the 3'-UTR. Required for accumulation of METTL3 and METTL14 to nuclear speckle. Acts as a mRNA splicing regulator. Regulates G2/M cell-cycle transition by binding to the 3' UTR of CCNA2, which enhances its stability. Impairs WT1 DNA-binding ability and inhibits expression of WT1 target genes. The polypeptide is Pre-mRNA-splicing regulator WTAP (Mus musculus (Mouse)).